Consider the following 66-residue polypeptide: Large ribosomal subunit protein bL35 (66 aa).

The protein belongs to the bacterial ribosomal protein bL35 family.

In Neorickettsia sennetsu (strain ATCC VR-367 / Miyayama) (Ehrlichia sennetsu), this protein is Large ribosomal subunit protein bL35.